The chain runs to 98 residues: Exopolysaccharide production repressor protein (98 aa).

Transmembrane regions (helical) follow at residues 6–26 (VFLS…YLNG) and 35–55 (TLIC…FLVW). The segment at 73 to 98 (AEAANDEKQPGKVSLRRLNRPHHLNS) is disordered. A compositionally biased stretch (basic residues) spans 86-98 (SLRRLNRPHHLNS).

Its subcellular location is the cell membrane. The protein operates within glycan metabolism; exopolysaccharide biosynthesis. In terms of biological role, inhibition of exopolysaccharide synthesis (EPS) and nodulation ability (NOD). In Rhizobium meliloti (strain 1021) (Ensifer meliloti), this protein is Exopolysaccharide production repressor protein (exoX).